The sequence spans 191 residues: Leucyl/phenylalanyl-tRNA--protein transferase (191 aa).

It belongs to the L/F-transferase family.

It localises to the cytoplasm. The catalysed reaction is N-terminal L-lysyl-[protein] + L-leucyl-tRNA(Leu) = N-terminal L-leucyl-L-lysyl-[protein] + tRNA(Leu) + H(+). The enzyme catalyses N-terminal L-arginyl-[protein] + L-leucyl-tRNA(Leu) = N-terminal L-leucyl-L-arginyl-[protein] + tRNA(Leu) + H(+). It catalyses the reaction L-phenylalanyl-tRNA(Phe) + an N-terminal L-alpha-aminoacyl-[protein] = an N-terminal L-phenylalanyl-L-alpha-aminoacyl-[protein] + tRNA(Phe). In terms of biological role, functions in the N-end rule pathway of protein degradation where it conjugates Leu, Phe and, less efficiently, Met from aminoacyl-tRNAs to the N-termini of proteins containing an N-terminal arginine or lysine. This Gloeothece citriformis (strain PCC 7424) (Cyanothece sp. (strain PCC 7424)) protein is Leucyl/phenylalanyl-tRNA--protein transferase.